Here is an 840-residue protein sequence, read N- to C-terminus: V-type proton ATPase 116 kDa subunit a 4 (840 aa).

The Cytoplasmic portion of the chain corresponds to 1-390 (MVSVFRSEEM…DAYGVGSYRE (390 aa)). Residues 391-409 (INPAPYTIITFPFLFAVMF) form a helical membrane-spanning segment. Residues 410-411 (GD) are Vacuolar-facing. The helical transmembrane segment at 412–428 (CGHGTVMLLAALWMILN) threads the bilayer. Topologically, residues 429 to 443 (ERRLLSQKTDNEIWN) are cytoplasmic. A helical membrane pass occupies residues 444-473 (TFFHGRYLILLMGIFSIYTGLIYNDCFSKS). The Vacuolar portion of the chain corresponds to 474–538 (LNIFGSSWSV…ASNKLTFLNS (65 aa)). The helical transmembrane segment at 539 to 558 (YKMKMSVILGIVQMVFGVIL) threads the bilayer. Over 559-576 (SLFNHIYFRRTLNIILQF) the chain is Cytoplasmic. The chain crosses the membrane as a helical span at residues 577–597 (IPEMIFILCLFGYLVFMIIFK). Over 598 to 642 (WCCFDVHVSQHAPSILIHFINMFLFNYSDSSNAPLYKHQQEVQSF) the chain is Vacuolar. The helical transmembrane segment at 643–662 (FVVMALISVPWMLLIKPFIL) threads the bilayer. The Cytoplasmic segment spans residues 663 to 727 (RASHRKSQLQ…DVFVHQAIHT (65 aa)). The interval 675–704 (RIQEDATENIEGDSSSPSSRSGQRTSADTH) is disordered. Residues 728–752 (IEYCLGCISNTASYLRLWALSLAHA) form a helical membrane-spanning segment. Over 753–773 (QLSEVLWTMVMNSGLQTRGWG) the chain is Vacuolar. Residues 774–812 (GIVGVFIIFAVFAVLTVAILLIMEGLSAFLHALRLHWVE) form a helical membrane-spanning segment. Topologically, residues 813-840 (FQNKFYVGDGYKFSPFSFKHILDGTAEE) are cytoplasmic.

This sequence belongs to the V-ATPase 116 kDa subunit family. In terms of assembly, V-ATPase is a heteromultimeric enzyme made up of two complexes: the ATP-hydrolytic V1 complex and the proton translocation V0 complex. The V1 complex consists of three catalytic AB heterodimers that form a heterohexamer, three peripheral stalks each consisting of EG heterodimers, one central rotor including subunits D and F, and the regulatory subunits C and H. The proton translocation complex V0 consists of the proton transport subunit a, a ring of proteolipid subunits c9c'', rotary subunit d, subunits e and f, and the accessory subunits ATP6AP1/Ac45 and ATP6AP2/PRR. Interacts with the V1 complex V-ATPase subunit A ATP6V1A. Interacts with the V0 complex V-ATPase subunit c ATP6V0C. Expressed in adult and fetal kidney. Found in the inner ear.

Its subcellular location is the apical cell membrane. The protein resides in the basolateral cell membrane. In terms of biological role, subunit of the V0 complex of vacuolar(H+)-ATPase (V-ATPase), a multisubunit enzyme composed of a peripheral complex (V1) that hydrolyzes ATP and a membrane integral complex (V0) that translocates protons. V-ATPase is responsible for acidifying and maintaining the pH of intracellular compartments and in some cell types, is targeted to the plasma membrane, where it is responsible for acidifying the extracellular environment. Involved in normal vectorial acid transport into the urine by the kidney. The protein is V-type proton ATPase 116 kDa subunit a 4 (ATP6V0A4) of Homo sapiens (Human).